A 262-amino-acid polypeptide reads, in one-letter code: Putative hydro-lyase Cbei_2760 (262 aa).

It belongs to the D-glutamate cyclase family.

The chain is Putative hydro-lyase Cbei_2760 from Clostridium beijerinckii (strain ATCC 51743 / NCIMB 8052) (Clostridium acetobutylicum).